Reading from the N-terminus, the 631-residue chain is 1-deoxy-D-xylulose-5-phosphate synthase (631 aa).

Residues H87 and G128–S130 each bind thiamine diphosphate. Residue D159 participates in Mg(2+) binding. Thiamine diphosphate-binding positions include G160–A161, N188, F295, and E377. Residue N188 participates in Mg(2+) binding.

This sequence belongs to the transketolase family. DXPS subfamily. Homodimer. Mg(2+) serves as cofactor. It depends on thiamine diphosphate as a cofactor.

The catalysed reaction is D-glyceraldehyde 3-phosphate + pyruvate + H(+) = 1-deoxy-D-xylulose 5-phosphate + CO2. The protein operates within metabolic intermediate biosynthesis; 1-deoxy-D-xylulose 5-phosphate biosynthesis; 1-deoxy-D-xylulose 5-phosphate from D-glyceraldehyde 3-phosphate and pyruvate: step 1/1. Its function is as follows. Catalyzes the acyloin condensation reaction between C atoms 2 and 3 of pyruvate and glyceraldehyde 3-phosphate to yield 1-deoxy-D-xylulose-5-phosphate (DXP). This Pseudomonas putida (strain ATCC 47054 / DSM 6125 / CFBP 8728 / NCIMB 11950 / KT2440) protein is 1-deoxy-D-xylulose-5-phosphate synthase.